A 200-amino-acid polypeptide reads, in one-letter code: Holliday junction branch migration complex subunit RuvA (200 aa).

Residues 1–63 (MIASVRGEVL…EDSMTLYGFP (63 aa)) are domain I. The domain II stretch occupies residues 64 to 142 (DSESKELFGL…AVGSTSGAVP (79 aa)). The interval 142-146 (PLGAG) is flexible linker. Positions 147 to 200 (GGGSVRDQIVEALVGLGFPAKQAEQATDSVLAEAPESTTSSALRSALSLLGKTR) are domain III.

This sequence belongs to the RuvA family. As to quaternary structure, homotetramer. Forms an RuvA(8)-RuvB(12)-Holliday junction (HJ) complex. HJ DNA is sandwiched between 2 RuvA tetramers; dsDNA enters through RuvA and exits via RuvB. An RuvB hexamer assembles on each DNA strand where it exits the tetramer. Each RuvB hexamer is contacted by two RuvA subunits (via domain III) on 2 adjacent RuvB subunits; this complex drives branch migration. In the full resolvosome a probable DNA-RuvA(4)-RuvB(12)-RuvC(2) complex forms which resolves the HJ.

The protein localises to the cytoplasm. Its function is as follows. The RuvA-RuvB-RuvC complex processes Holliday junction (HJ) DNA during genetic recombination and DNA repair, while the RuvA-RuvB complex plays an important role in the rescue of blocked DNA replication forks via replication fork reversal (RFR). RuvA specifically binds to HJ cruciform DNA, conferring on it an open structure. The RuvB hexamer acts as an ATP-dependent pump, pulling dsDNA into and through the RuvAB complex. HJ branch migration allows RuvC to scan DNA until it finds its consensus sequence, where it cleaves and resolves the cruciform DNA. This Rhodococcus opacus (strain B4) protein is Holliday junction branch migration complex subunit RuvA.